The following is a 506-amino-acid chain: MGEFQGYLELDKFRQHHFLYPLIFQEYIYALAHDHVLNRSILLDNFGYDNKSSSIIVKRLITRMGQQNHLLISANYSNKNKFLGHNKNFDSQMISEGFAVIVEIPFSLRLVSSLERKEIVKSHNLRSIHSIFPFLEDNFLHLNYVSDILIPHPIHLEILVQTLRYWVKDASSLHLLRFFLYEYQSWNSLITPTPKKSISIVSQRNQRLFLFLYNSYVCEYESTFIFLWNQSSHLQSTSYGTLFERIYFYGKIKHLVEVFSNDFPTAPWLFKDPFMHYIRYQGKSILASKGTPLLLNKWKYYLVNFWQCHYYVWSQSGRIHINQLSNHSLDFLGYLSSVRLNPSVVRNQMLENSFIIDNAIKKFDIIVPILPLIRSLAKAKFCNVVGDPISKPSWAESSDSDIIDRFVRICRNISHYHSGASKKKSLYRIKYILRLSCARTLARKHKSTVRAFLKRLGSGLLEEFLTEDEQALSLIFPRASSTLWRLYRGRIWYLDIICINDLVNHE.

Belongs to the intron maturase 2 family. MatK subfamily.

The protein resides in the plastid. It localises to the chloroplast. In terms of biological role, usually encoded in the trnK tRNA gene intron. Probably assists in splicing its own and other chloroplast group II introns. The chain is Maturase K from Sullivantia sullivantii (Sullivant's coolwort).